A 517-amino-acid chain; its full sequence is GMP synthase [glutamine-hydrolyzing] (517 aa).

One can recognise a Glutamine amidotransferase type-1 domain in the interval arginine 9–leucine 199. Cysteine 86 acts as the Nucleophile in catalysis. Active-site residues include histidine 173 and glutamate 175. The 193-residue stretch at tryptophan 200–arginine 392 folds into the GMPS ATP-PPase domain. Residue serine 227–serine 233 participates in ATP binding.

Homodimer.

It catalyses the reaction XMP + L-glutamine + ATP + H2O = GMP + L-glutamate + AMP + diphosphate + 2 H(+). It participates in purine metabolism; GMP biosynthesis; GMP from XMP (L-Gln route): step 1/1. Functionally, catalyzes the synthesis of GMP from XMP. This chain is GMP synthase [glutamine-hydrolyzing], found in Aliivibrio fischeri (strain ATCC 700601 / ES114) (Vibrio fischeri).